A 223-amino-acid chain; its full sequence is Translation initiation factor 6 (223 aa).

The protein belongs to the eIF-6 family. Associates with the 50S ribosomal subunit, specifically with protein L14. Binds to 23S rRNA, possibly between where the 30S and 50S subunits associate to initiate translation. Post-translationally, modified in an unknown fashion (not phosphorylation) following release from 50S ribosomal subunits.

In terms of biological role, binds to the 50S ribosomal subunit and prevents its association with the 30S ribosomal subunit to form the 70S initiation complex. Inhibits translation of both leadered and leaderless mRNAs, maybe by binding to the 50S ribosome subunit, preventing it from binding to the 30S subunit. The protein is Translation initiation factor 6 of Saccharolobus solfataricus (strain ATCC 35092 / DSM 1617 / JCM 11322 / P2) (Sulfolobus solfataricus).